We begin with the raw amino-acid sequence, 104 residues long: Large ribosomal subunit protein eL30 (104 aa).

This sequence belongs to the eukaryotic ribosomal protein eL30 family.

This chain is Large ribosomal subunit protein eL30 (RPL30), found in Leishmania major.